Here is a 213-residue protein sequence, read N- to C-terminus: Probable RNA 2'-phosphotransferase (213 aa).

The protein belongs to the KptA/TPT1 family.

In terms of biological role, removes the 2'-phosphate from RNA via an intermediate in which the phosphate is ADP-ribosylated by NAD followed by a presumed transesterification to release the RNA and generate ADP-ribose 1''-2''-cyclic phosphate (APPR&gt;P). May function as an ADP-ribosylase. This Pyrobaculum aerophilum (strain ATCC 51768 / DSM 7523 / JCM 9630 / CIP 104966 / NBRC 100827 / IM2) protein is Probable RNA 2'-phosphotransferase.